Here is a 212-residue protein sequence, read N- to C-terminus: Cytochrome c biogenesis ATP-binding export protein CcmA (212 aa).

Residues 7–209 form the ABC transporter domain; sequence LSLQNLSCQR…HLQKLNLAAY (203 aa). 39–46 is a binding site for ATP; the sequence is GHNGIGKT.

The protein belongs to the ABC transporter superfamily. CcmA exporter (TC 3.A.1.107) family. The complex is composed of two ATP-binding proteins (CcmA) and two transmembrane proteins (CcmB).

It localises to the cell inner membrane. It carries out the reaction heme b(in) + ATP + H2O = heme b(out) + ADP + phosphate + H(+). Its function is as follows. Part of the ABC transporter complex CcmAB involved in the biogenesis of c-type cytochromes; once thought to export heme, this seems not to be the case, but its exact role is uncertain. Responsible for energy coupling to the transport system. The sequence is that of Cytochrome c biogenesis ATP-binding export protein CcmA from Haemophilus influenzae (strain ATCC 51907 / DSM 11121 / KW20 / Rd).